Here is a 205-residue protein sequence, read N- to C-terminus: Fibrillarin-like rRNA/tRNA 2'-O-methyltransferase (205 aa).

Residues 60-61 (ST), 76-77 (EF), 101-102 (DA), and 121-124 (DIAQ) contribute to the S-adenosyl-L-methionine site.

It belongs to the methyltransferase superfamily. Fibrillarin family. Interacts with nop5. Component of box C/D small ribonucleoprotein (sRNP) particles that contain rpl7ae, FlpA and nop5, plus a guide RNA.

Involved in pre-rRNA and tRNA processing. Utilizes the methyl donor S-adenosyl-L-methionine to catalyze the site-specific 2'-hydroxyl methylation of ribose moieties in rRNA and tRNA. Site specificity is provided by a guide RNA that base pairs with the substrate. Methylation occurs at a characteristic distance from the sequence involved in base pairing with the guide RNA. The polypeptide is Fibrillarin-like rRNA/tRNA 2'-O-methyltransferase (Methanospirillum hungatei JF-1 (strain ATCC 27890 / DSM 864 / NBRC 100397 / JF-1)).